Here is a 417-residue protein sequence, read N- to C-terminus: Multifunctional CCA protein (417 aa).

Gly8 and Arg11 together coordinate ATP. Positions 8 and 11 each coordinate CTP. Mg(2+) contacts are provided by Asp21 and Asp23. Residues Arg91, Arg137, and Arg140 each contribute to the ATP site. Positions 91, 137, and 140 each coordinate CTP. The HD domain occupies 225–326 (SGIHTLMTLQ…LNVLKKTDAF (102 aa)).

Belongs to the tRNA nucleotidyltransferase/poly(A) polymerase family. Bacterial CCA-adding enzyme type 1 subfamily. Monomer. Can also form homodimers and oligomers. Mg(2+) serves as cofactor. Ni(2+) is required as a cofactor.

It catalyses the reaction a tRNA precursor + 2 CTP + ATP = a tRNA with a 3' CCA end + 3 diphosphate. The catalysed reaction is a tRNA with a 3' CCA end + 2 CTP + ATP = a tRNA with a 3' CCACCA end + 3 diphosphate. Its function is as follows. Catalyzes the addition and repair of the essential 3'-terminal CCA sequence in tRNAs without using a nucleic acid template. Adds these three nucleotides in the order of C, C, and A to the tRNA nucleotide-73, using CTP and ATP as substrates and producing inorganic pyrophosphate. tRNA 3'-terminal CCA addition is required both for tRNA processing and repair. Also involved in tRNA surveillance by mediating tandem CCA addition to generate a CCACCA at the 3' terminus of unstable tRNAs. While stable tRNAs receive only 3'-terminal CCA, unstable tRNAs are marked with CCACCA and rapidly degraded. This chain is Multifunctional CCA protein, found in Neisseria meningitidis serogroup B (strain ATCC BAA-335 / MC58).